We begin with the raw amino-acid sequence, 258 residues long: MLKRRIIPCLDVKAGRVVKGVAFLNHRDAGDPVELAAAYDAGGADELVFYDITASSDERAIMVDVVERTAAQVFIPLTVGGGLRTVEDMYRMLRAGADKVSINTAAVLNPQLIEDGARRFGSQCIVLSIDARRVNASDEPPRWQVFTHTGRDPRPTGLDAIEWARRGVELGAGEIVINSMDEDGVGGGYDIDLLRAITEAVNVPVIASGGVGSPEHMYAGLVEGRADAVLAASIFHFGAYTIRDVKQYLAERGVPVRL.

Catalysis depends on residues Asp-11 and Asp-130.

It belongs to the HisA/HisF family. As to quaternary structure, heterodimer of HisH and HisF.

The protein localises to the cytoplasm. It catalyses the reaction 5-[(5-phospho-1-deoxy-D-ribulos-1-ylimino)methylamino]-1-(5-phospho-beta-D-ribosyl)imidazole-4-carboxamide + L-glutamine = D-erythro-1-(imidazol-4-yl)glycerol 3-phosphate + 5-amino-1-(5-phospho-beta-D-ribosyl)imidazole-4-carboxamide + L-glutamate + H(+). It functions in the pathway amino-acid biosynthesis; L-histidine biosynthesis; L-histidine from 5-phospho-alpha-D-ribose 1-diphosphate: step 5/9. In terms of biological role, IGPS catalyzes the conversion of PRFAR and glutamine to IGP, AICAR and glutamate. The HisF subunit catalyzes the cyclization activity that produces IGP and AICAR from PRFAR using the ammonia provided by the HisH subunit. This is Imidazole glycerol phosphate synthase subunit HisF from Roseiflexus sp. (strain RS-1).